The primary structure comprises 927 residues: Translation initiation factor IF-2 (927 aa).

A disordered region spans residues 27–338 (LGLPVKSHAS…APKPVTERKF (312 aa)). Over residues 49–69 (SFSSSKTKAPTNSVQTNQGVK) the composition is skewed to polar residues. Composition is skewed to basic and acidic residues over residues 70–86 (TESK…DDKP) and 101–138 (FKAE…DRRH). The segment covering 146-159 (GNRNDNRQGQQNNR) has biased composition (low complexity). Basic and acidic residues-rich tracts occupy residues 160 to 171 (NKNDGRYADHKQ), 202 to 226 (YSRH…EQEL), and 234 to 257 (AQEE…KEIV). A compositionally biased stretch (low complexity) spans 300-316 (NWNNQNQVRNQRNSNWN). One can recognise a tr-type G domain in the interval 428-597 (ERPPVVTIMG…LLVAEMEELK (170 aa)). Positions 437 to 444 (GHVDHGKT) are G1. 437–444 (GHVDHGKT) contacts GTP. The G2 stretch occupies residues 462 to 466 (GITQH). Residues 483–486 (DTPG) are G3. GTP is bound by residues 483 to 487 (DTPGH) and 537 to 540 (NKID). Residues 537–540 (NKID) form a G4 region. Positions 573–575 (SAK) are G5.

It belongs to the TRAFAC class translation factor GTPase superfamily. Classic translation factor GTPase family. IF-2 subfamily.

It localises to the cytoplasm. In terms of biological role, one of the essential components for the initiation of protein synthesis. Protects formylmethionyl-tRNA from spontaneous hydrolysis and promotes its binding to the 30S ribosomal subunits. Also involved in the hydrolysis of GTP during the formation of the 70S ribosomal complex. The sequence is that of Translation initiation factor IF-2 from Streptococcus agalactiae serotype Ia (strain ATCC 27591 / A909 / CDC SS700).